Here is a 447-residue protein sequence, read N- to C-terminus: Blue-light photoreceptor PHR2 (447 aa).

Residues 1-14 (MDSSNVEENLNPET) are compositionally biased toward polar residues. The interval 1-20 (MDSSNVEENLNPETKSAEEQ) is disordered. The Photolyase/cryptochrome alpha/beta domain maps to 115–249 (RAAVVWFRND…EVKYFWGSTL (135 aa)).

It belongs to the DNA photolyase class-1 family. FAD serves as cofactor.

The polypeptide is Blue-light photoreceptor PHR2 (PHR2) (Arabidopsis thaliana (Mouse-ear cress)).